The sequence spans 321 residues: Sporulation protein cse15 (321 aa).

Coiled coils occupy residues 37-70 (FHQK…TKEK) and 108-205 (IEEK…KEKL). Composition is skewed to basic and acidic residues over residues 234-243 (GTKQKEKTEE) and 282-293 (AKSHTIEELKNR). Disordered stretches follow at residues 234–253 (GTKQ…AQPN) and 274–293 (AHAQ…LKNR).

The sequence is that of Sporulation protein cse15 (cse15) from Bacillus subtilis (strain 168).